A 444-amino-acid polypeptide reads, in one-letter code: Cell wall mannoprotein PST1 (444 aa).

Residues 1-19 (MQLHSLIASTALLITSALA) form the signal peptide. N-linked (GlcNAc...) asparagine glycosylation is found at Asn-57, Asn-76, Asn-83, Asn-86, Asn-196, Asn-210, Asn-228, Asn-235, Asn-242, Asn-263, Asn-268, Asn-280, Asn-292, Asn-305, and Asn-329. Composition is skewed to low complexity over residues 359 to 381 (SVKL…SKSS) and 395 to 417 (KAAA…KSSK). The tract at residues 359–418 (SVKLSSTSKSQSSQTTAKVSKSSSKAEEKKFTSGDIKAAASASSVSSSSASSSSSKSSKG) is disordered. The GPI-anchor amidated asparagine moiety is linked to residue Asn-419. Positions 420–444 (AAIMAPIGQTTPLVGLLTAIIMSIM) are cleaved as a propeptide — removed in mature form.

Belongs to the SPS2 family. Post-translationally, extensively N- and O-mannosylated.

Its subcellular location is the cell membrane. It localises to the secreted. The protein resides in the cell wall. Functionally, has a partially redundant function to ECM33 in cell wall integrity. May be involved in a repair mechanism activated in response to cell wall damage. In Saccharomyces cerevisiae (strain YJM789) (Baker's yeast), this protein is Cell wall mannoprotein PST1 (PST1).